Consider the following 264-residue polypeptide: Phosphatidylserine decarboxylase proenzyme (264 aa).

Active-site charge relay system; for autoendoproteolytic cleavage activity residues include aspartate 86, histidine 142, and serine 226. Residue serine 226 is the Schiff-base intermediate with substrate; via pyruvic acid; for decarboxylase activity of the active site. Pyruvic acid (Ser); by autocatalysis is present on serine 226.

This sequence belongs to the phosphatidylserine decarboxylase family. PSD-B subfamily. Prokaryotic type I sub-subfamily. In terms of assembly, heterodimer of a large membrane-associated beta subunit and a small pyruvoyl-containing alpha subunit. Pyruvate serves as cofactor. Is synthesized initially as an inactive proenzyme. Formation of the active enzyme involves a self-maturation process in which the active site pyruvoyl group is generated from an internal serine residue via an autocatalytic post-translational modification. Two non-identical subunits are generated from the proenzyme in this reaction, and the pyruvate is formed at the N-terminus of the alpha chain, which is derived from the carboxyl end of the proenzyme. The autoendoproteolytic cleavage occurs by a canonical serine protease mechanism, in which the side chain hydroxyl group of the serine supplies its oxygen atom to form the C-terminus of the beta chain, while the remainder of the serine residue undergoes an oxidative deamination to produce ammonia and the pyruvoyl prosthetic group on the alpha chain. During this reaction, the Ser that is part of the protease active site of the proenzyme becomes the pyruvoyl prosthetic group, which constitutes an essential element of the active site of the mature decarboxylase.

It localises to the cell membrane. The catalysed reaction is a 1,2-diacyl-sn-glycero-3-phospho-L-serine + H(+) = a 1,2-diacyl-sn-glycero-3-phosphoethanolamine + CO2. It functions in the pathway phospholipid metabolism; phosphatidylethanolamine biosynthesis; phosphatidylethanolamine from CDP-diacylglycerol: step 2/2. Its function is as follows. Catalyzes the formation of phosphatidylethanolamine (PtdEtn) from phosphatidylserine (PtdSer). This Geobacillus kaustophilus (strain HTA426) protein is Phosphatidylserine decarboxylase proenzyme.